A 536-amino-acid polypeptide reads, in one-letter code: Putative cysteine ligase BshC (536 aa).

The protein belongs to the BshC family.

In terms of biological role, involved in bacillithiol (BSH) biosynthesis. May catalyze the last step of the pathway, the addition of cysteine to glucosamine malate (GlcN-Mal) to generate BSH. The sequence is that of Putative cysteine ligase BshC from Anoxybacillus flavithermus (strain DSM 21510 / WK1).